The following is a 604-amino-acid chain: Elongation factor 4 (604 aa).

Residues Asp-2–Arg-184 form the tr-type G domain. Residues Asp-14–Thr-19 and Asn-131–Asp-134 each bind GTP.

This sequence belongs to the TRAFAC class translation factor GTPase superfamily. Classic translation factor GTPase family. LepA subfamily.

It localises to the cell inner membrane. It catalyses the reaction GTP + H2O = GDP + phosphate + H(+). Functionally, required for accurate and efficient protein synthesis under certain stress conditions. May act as a fidelity factor of the translation reaction, by catalyzing a one-codon backward translocation of tRNAs on improperly translocated ribosomes. Back-translocation proceeds from a post-translocation (POST) complex to a pre-translocation (PRE) complex, thus giving elongation factor G a second chance to translocate the tRNAs correctly. Binds to ribosomes in a GTP-dependent manner. The chain is Elongation factor 4 from Methylibium petroleiphilum (strain ATCC BAA-1232 / LMG 22953 / PM1).